We begin with the raw amino-acid sequence, 1196 residues long: Nucleolar protein 6 (1196 aa).

Disordered stretches follow at residues 1–75 (MPGK…VKPP) and 1140–1196 (KREQ…KALK). Positions 22–31 (HAEDHSDLEH) are enriched in basic and acidic residues. Residues 1165–1174 (KPKKHRKRKG) show a composition bias toward basic residues.

This sequence belongs to the NRAP family. In terms of assembly, part of the small subunit (SSU) processome, composed of more than 70 proteins and the RNA chaperone small nucleolar RNA (snoRNA) U3.

The protein resides in the nucleus. It is found in the nucleolus. It localises to the chromosome. In terms of biological role, part of the small subunit (SSU) processome, first precursor of the small eukaryotic ribosomal subunit. During the assembly of the SSU processome in the nucleolus, many ribosome biogenesis factors, an RNA chaperone and ribosomal proteins associate with the nascent pre-rRNA and work in concert to generate RNA folding, modifications, rearrangements and cleavage as well as targeted degradation of pre-ribosomal RNA by the RNA exosome. This chain is Nucleolar protein 6, found in Drosophila sechellia (Fruit fly).